Reading from the N-terminus, the 250-residue chain is Small ribosomal subunit protein uS2 (250 aa).

It belongs to the universal ribosomal protein uS2 family.

This chain is Small ribosomal subunit protein uS2, found in Albidiferax ferrireducens (strain ATCC BAA-621 / DSM 15236 / T118) (Rhodoferax ferrireducens).